We begin with the raw amino-acid sequence, 95 residues long: Small ribosomal subunit protein uS19 (95 aa).

The segment at 75–95 (APTRSFRGHGGKKADKRGKMK) is disordered. A compositionally biased stretch (basic residues) spans 80–95 (FRGHGGKKADKRGKMK).

This sequence belongs to the universal ribosomal protein uS19 family.

In terms of biological role, protein S19 forms a complex with S13 that binds strongly to the 16S ribosomal RNA. In Roseiflexus sp. (strain RS-1), this protein is Small ribosomal subunit protein uS19.